A 336-amino-acid polypeptide reads, in one-letter code: Methionine import ATP-binding protein MetN (336 aa).

Residues 2 to 254 enclose the ABC transporter domain; that stretch reads IKIKNLKKYY…PNAKMKEFLG (253 aa). 34–41 contributes to the ATP binding site; that stretch reads GHSGAGKS.

Belongs to the ABC transporter superfamily. Methionine importer (TC 3.A.1.24) family. As to quaternary structure, the complex is composed of two ATP-binding proteins (MetN), two transmembrane proteins (MetI) and a solute-binding protein (MetQ).

It is found in the cell inner membrane. It catalyses the reaction L-methionine(out) + ATP + H2O = L-methionine(in) + ADP + phosphate + H(+). The catalysed reaction is D-methionine(out) + ATP + H2O = D-methionine(in) + ADP + phosphate + H(+). Functionally, part of the ABC transporter complex MetNIQ involved in methionine import. Responsible for energy coupling to the transport system. This chain is Methionine import ATP-binding protein MetN, found in Campylobacter jejuni subsp. jejuni serotype O:2 (strain ATCC 700819 / NCTC 11168).